The sequence spans 785 residues: Adhesion G-protein coupled receptor G7 (785 aa).

The first 26 residues, 1–26 (MRSCRSCNVRVLVAIVCGLLTGIVLG), serve as a signal peptide directing secretion. The Extracellular portion of the chain corresponds to 27–435 (LGIWRMVIRI…KYPKSLDILS (409 aa)). N-linked (GlcNAc...) asparagine glycosylation is found at asparagine 82, asparagine 122, asparagine 133, asparagine 152, asparagine 159, asparagine 178, asparagine 195, asparagine 239, asparagine 289, asparagine 348, asparagine 400, and asparagine 408. Residues 271-425 (FSVQKGSSNS…AVLMSFKKDY (155 aa)) form the GAIN-B domain. Intrachain disulfides connect cysteine 380–cysteine 407 and cysteine 395–cysteine 409. Residues 380–425 (CVYWNFLINDWDTQGCQKTGNTTEFLRCNCSHTTNFAVLMSFKKDY) are GPS. The chain crosses the membrane as a helical span at residues 436 to 456 (NIGCALSIAGLALTILFQILT). Over 457-465 (RKIRKTSVT) the chain is Cytoplasmic. Residues 466-486 (WVLVSLCSSMLIFNLLFVFGI) traverse the membrane as a helical segment. Residues 487–523 (ENSNKNLKTSDSDINVKPENNKIPESDTIETPNPSCT) are Extracellular-facing. The helical transmembrane segment at 524–544 (AIAALLHYFLLVTFTWNGLSA) threads the bilayer. Topologically, residues 545–561 (TQLYFLLIRTMKPLPRH) are cytoplasmic. The helical transmembrane segment at 562 to 582 (FIIFISLVGWGVPAIIVGVTI) threads the bilayer. The Extracellular portion of the chain corresponds to 583 to 623 (GSIYALSGNKRYWELDYRQEEICWLAVPKDNDYARSPLLWS). The chain crosses the membrane as a helical span at residues 624 to 644 (FIIPVTIILITNITIFVIITV). Residues 645–668 (KVLWKNNQNLTSTKKVSSLKKVFS) are Cytoplasmic-facing. Residues 669–689 (TLSIAVVFGVTWILAYAMLIS) form a helical membrane-spanning segment. Topologically, residues 690–694 (NDDIR) are extracellular. The helical transmembrane segment at 695–715 (IVFSYIFCLFNTTQGLQIFIL) threads the bilayer. Over 716 to 785 (YTVRTKVFQS…SGMTEETSLS (70 aa)) the chain is Cytoplasmic.

Belongs to the G-protein coupled receptor 2 family. Adhesion G-protein coupled receptor (ADGR) subfamily. As to expression, selectively expressed in the intestinal tissues.

The protein localises to the membrane. Functionally, orphan receptor. The chain is Adhesion G-protein coupled receptor G7 (Adgrg7) from Mus musculus (Mouse).